We begin with the raw amino-acid sequence, 684 residues long: DNA-directed RNA polymerase subunit beta' (684 aa).

Cys69, Cys71, Cys87, and Cys90 together coordinate Zn(2+). Residues Asp489, Asp491, and Asp493 each contribute to the Mg(2+) site.

Belongs to the RNA polymerase beta' chain family. RpoC1 subfamily. As to quaternary structure, in plastids the minimal PEP RNA polymerase catalytic core is composed of four subunits: alpha, beta, beta', and beta''. When a (nuclear-encoded) sigma factor is associated with the core the holoenzyme is formed, which can initiate transcription. It depends on Mg(2+) as a cofactor. The cofactor is Zn(2+).

It localises to the plastid. The protein resides in the chloroplast. It carries out the reaction RNA(n) + a ribonucleoside 5'-triphosphate = RNA(n+1) + diphosphate. Functionally, DNA-dependent RNA polymerase catalyzes the transcription of DNA into RNA using the four ribonucleoside triphosphates as substrates. In Marchantia polymorpha (Common liverwort), this protein is DNA-directed RNA polymerase subunit beta'.